Reading from the N-terminus, the 165-residue chain is Large ribosomal subunit protein uL11 (165 aa).

Phosphoserine is present on serine 38. Residue lysine 40 forms a Glycyl lysine isopeptide (Lys-Gly) (interchain with G-Cter in SUMO2) linkage. Lysine 48 is covalently cross-linked (Glycyl lysine isopeptide (Lys-Gly) (interchain with G-Cter in ubiquitin)). Position 54 is an N6-acetyllysine (lysine 54). A Glycyl lysine isopeptide (Lys-Gly) (interchain with G-Cter in ubiquitin) cross-link involves residue lysine 83. The residue at position 165 (serine 165) is a Phosphoserine.

It belongs to the universal ribosomal protein uL11 family. Component of the large ribosomal subunit. Mature ribosomes consist of a small (40S) and a large (60S) subunit. The 40S subunit contains about 33 different proteins and 1 molecule of RNA (18S). The 60S subunit contains about 49 different proteins and 3 molecules of RNA (28S, 5.8S and 5S). Post-translationally, ubiquitinated at Lys-48 and Lys-83 by RNF14 and RNF25 in response to ribosome collisions (ribosome stalling).

The protein localises to the cytoplasm. In terms of biological role, component of the large ribosomal subunit. The ribosome is a large ribonucleoprotein complex responsible for the synthesis of proteins in the cell. Binds directly to 26S ribosomal RNA. This is Large ribosomal subunit protein uL11 (RPL12) from Bos taurus (Bovine).